Reading from the N-terminus, the 363-residue chain is MESEGFSATTEQYEYYDYANETGLQPCDETDWDFSYSLLPVFYMIVFVLGLSGNGVVIFTVWKAKPKRRSADTYIGNLALADLAFVVTLPLWATYTALGFHWPFGSALCKLSSYLVLLNMFASVFCLTCLSFDRYLAIVHSLSSAKLRSRSSILVSLAVIWLFSGLLALPSLILRDTRVEGNNTICDLDFSGVSSKENENFWIGGLSILTTVPGFLLPLLLMTIFYCFIGGKVTMHFQNLKKEEQKKKRLLKIIITLVVVFAICWLPFHILKTIHFLDLMGFLELSCSAQNIIVSLHPYATCLAYVNSCLNPFLYAFFDLRFRSQCFFFFGFKKVLQGHLSNTSSSLSAQTQKSEIHSLATKV.

Residues 1–38 are Extracellular-facing; it reads MESEGFSATTEQYEYYDYANETGLQPCDETDWDFSYSL. An N-linked (GlcNAc...) asparagine glycan is attached at Asn20. 2 cysteine pairs are disulfide-bonded: Cys27–Cys287 and Cys109–Cys186. The helical transmembrane segment at 39-59 threads the bilayer; it reads LPVFYMIVFVLGLSGNGVVIF. The Cytoplasmic segment spans residues 60–77; the sequence is TVWKAKPKRRSADTYIGN. Residues 78-98 traverse the membrane as a helical segment; the sequence is LALADLAFVVTLPLWATYTAL. At 99 to 111 the chain is on the extracellular side; that stretch reads GFHWPFGSALCKL. A helical membrane pass occupies residues 112–132; the sequence is SSYLVLLNMFASVFCLTCLSF. At 133-152 the chain is on the cytoplasmic side; that stretch reads DRYLAIVHSLSSAKLRSRSS. Residues 153 to 173 traverse the membrane as a helical segment; it reads ILVSLAVIWLFSGLLALPSLI. Residues 174–200 are Extracellular-facing; sequence LRDTRVEGNNTICDLDFSGVSSKENEN. Asn182 is a glycosylation site (N-linked (GlcNAc...) asparagine). The chain crosses the membrane as a helical span at residues 201-221; sequence FWIGGLSILTTVPGFLLPLLL. At 222–249 the chain is on the cytoplasmic side; the sequence is MTIFYCFIGGKVTMHFQNLKKEEQKKKR. Residues 250–270 form a helical membrane-spanning segment; the sequence is LLKIIITLVVVFAICWLPFHI. Residues 271 to 297 lie on the Extracellular side of the membrane; the sequence is LKTIHFLDLMGFLELSCSAQNIIVSLH. Residues 298–318 form a helical membrane-spanning segment; sequence PYATCLAYVNSCLNPFLYAFF. Residues 319–363 are Cytoplasmic-facing; the sequence is DLRFRSQCFFFFGFKKVLQGHLSNTSSSLSAQTQKSEIHSLATKV.

Belongs to the G-protein coupled receptor 1 family. Expressed in all blood vessels including the posterior cardinal vein, intersomitic veins and the vitelline vein network.

It is found in the cell membrane. In terms of biological role, g protein-coupled receptor for peptide hormones apelin (apln) and apelin receptor early endogenous ligand (apela), that plays a role in the regulation of normal cardiovascular function and fluid homeostasis. When acting as apelin receptor, activates both G(i) protein pathway that inhibits adenylate cyclase activity, and the beta-arrestin pathway that promotes internalization of the receptor. Also functions as mechanoreceptor that is activated by pathological stimuli in a G-protein-independent fashion to induce beta-arrestin signaling, hence eliciting cardiac hypertrophy. However, the presence of apelin ligand blunts cardiac hypertrophic induction from APLNR/APJ on response to pathological stimuli. Plays a key role in early development such as gastrulation, blood vessels formation and heart morphogenesis by acting as a receptor for apela hormone, promoting endoderm and mesendoderm cell migration and regulating the migration of cells fated to become myocardial progenitors, respectively. Promotes angioblast migration toward the embryonic midline, i.e. the position of the future vessel formation, during vasculogenesis. May promote sinus venosus (SV)-derived endothelial cells migration into the developing heart to promote coronary blood vessel development. Required for cardiovascular development, particularly for intersomitic vein angiogenesis by acting as a receptor for apln hormone. Also plays a role in various processes in adults such as regulation of blood vessel formation, blood pressure, heart contractility, and heart failure. Acts upstream of the i/o type of G-alpha proteins in the differentiation of endothelium, erythroid cells, myeloid cells and cardiomyocytes. This Xenopus laevis (African clawed frog) protein is Apelin receptor B (aplnr-b).